Here is a 333-residue protein sequence, read N- to C-terminus: Aquaporin-1 (333 aa).

Positions 1–26 (MQKMSEKPLYRAAENPTRNADRRAGR) are disordered. Transmembrane regions (helical) follow at residues 85-105 (LAMFLFMSLLLGGAATAHFTG) and 116-136 (FHGFSAVFGIYVGAGVSGGII). The short motif at 137–139 (NPA) is the NPA 1 element. The next 3 membrane-spanning stretches (helical) occupy residues 156–176 (LVLVSAQYFGSFIASAVVYLI), 213–233 (TGAIFNQIFCTMLLSIGFLSI), and 245–265 (LFPFAVGLLIMTVFLAFSYSA). The NPA 2 signature appears at 270–272 (NPA). The chain crosses the membrane as a helical span at residues 303-323 (WLFPYVGALFGAVMYQIFVGV).

It belongs to the MIP/aquaporin (TC 1.A.8) family.

Its subcellular location is the cell membrane. Aquaglyceroporin that may modulate the water content and osmolytes during anhydrobiosis. The polypeptide is Aquaporin-1 (Milnesium tardigradum (Water bear)).